The chain runs to 568 residues: Sphingosine-1-phosphate lyase 1 (568 aa).

Residues 1–40 are Lumenal-facing; that stretch reads MPGTDLLKLKDFEPYLEILESYSTKAKNYVNGYCTKYEPW. The chain crosses the membrane as a helical; Signal-anchor for type III membrane protein span at residues 41–61; the sequence is QLIAWSVLCTLLIVWVYELIF. Residues 62 to 568 are Cytoplasmic-facing; sequence QPESLWSRFK…NQMNGSPKPR (507 aa). Lys353 carries the post-translational modification N6-(pyridoxal phosphate)lysine; alternate. Lys353 bears the N6-acetyllysine; alternate mark. 3'-nitrotyrosine occurs at positions 356 and 366. A Phosphoserine modification is found at Ser564.

This sequence belongs to the group II decarboxylase family. Sphingosine-1-phosphate lyase subfamily. Pyridoxal 5'-phosphate serves as cofactor. Highest levels are found in liver, small intestine and thymus, followed by kidney, lung, heart, spleen and brain (at protein level). Also detected in stomach, testis and skeletal muscle (at protein level).

It localises to the endoplasmic reticulum membrane. It catalyses the reaction sphinganine 1-phosphate = hexadecanal + phosphoethanolamine. It carries out the reaction sphing-4-enine 1-phosphate = (2E)-hexadecenal + phosphoethanolamine. It functions in the pathway lipid metabolism; sphingolipid metabolism. Cleaves phosphorylated sphingoid bases (PSBs), such as sphingosine-1-phosphate, into fatty aldehydes and phosphoethanolamine. Elevates stress-induced ceramide production and apoptosis. Required for global lipid homeostasis in liver and cholesterol homeostasis in fibroblasts. Involved in the regulation of pro-inflammatory response and neutrophil trafficking. Modulates neuronal autophagy via phosphoethanolamine production which regulates accumulation of aggregate-prone proteins such as APP. Seems to play a role in establishing neuronal contact sites and axonal maintenance. In Mus musculus (Mouse), this protein is Sphingosine-1-phosphate lyase 1.